The primary structure comprises 146 residues: Peptidyl-lysine N-acetyltransferase YiaC (146 aa).

Residues 1 to 143 (MIREAQRSEL…PTWIMSWPVV (143 aa)) enclose the N-acetyltransferase domain.

It belongs to the acetyltransferase family.

The catalysed reaction is L-lysyl-[protein] + acetyl-CoA = N(6)-acetyl-L-lysyl-[protein] + CoA + H(+). N-epsilon-lysine acetyltransferase that catalyzes acetylation of a large number of proteins. Overexpression inhibits motility. The sequence is that of Peptidyl-lysine N-acetyltransferase YiaC (yiaC) from Escherichia coli (strain K12).